Reading from the N-terminus, the 440-residue chain is Thymidine phosphorylase (440 aa).

This sequence belongs to the thymidine/pyrimidine-nucleoside phosphorylase family. In terms of assembly, homodimer.

It catalyses the reaction thymidine + phosphate = 2-deoxy-alpha-D-ribose 1-phosphate + thymine. It functions in the pathway pyrimidine metabolism; dTMP biosynthesis via salvage pathway; dTMP from thymine: step 1/2. The enzymes which catalyze the reversible phosphorolysis of pyrimidine nucleosides are involved in the degradation of these compounds and in their utilization as carbon and energy sources, or in the rescue of pyrimidine bases for nucleotide synthesis. In Escherichia coli (strain 55989 / EAEC), this protein is Thymidine phosphorylase.